Here is a 249-residue protein sequence, read N- to C-terminus: tRNA pseudouridine synthase A (249 aa).

The Nucleophile role is filled by Asp-53. Position 111 (Tyr-111) interacts with substrate.

It belongs to the tRNA pseudouridine synthase TruA family. In terms of assembly, homodimer.

The catalysed reaction is uridine(38/39/40) in tRNA = pseudouridine(38/39/40) in tRNA. Its function is as follows. Formation of pseudouridine at positions 38, 39 and 40 in the anticodon stem and loop of transfer RNAs. This is tRNA pseudouridine synthase A from Streptococcus mutans serotype c (strain ATCC 700610 / UA159).